A 343-amino-acid chain; its full sequence is Heme A synthase (343 aa).

Helical transmembrane passes span 13–33 (VAIW…VGGA), 96–116 (HRLL…VFLI), 130–150 (AMLG…SSGL), 161–181 (LMTH…TALD), 197–217 (GWAL…ALVA), 258–278 (FNHR…VVLA), 294–314 (AVAA…MAAV), and 318–338 (LGVL…AFAW). Residue His-260 participates in heme binding. Heme is bound at residue His-322.

This sequence belongs to the COX15/CtaA family. Type 2 subfamily. Interacts with CtaB. Heme b is required as a cofactor.

The protein localises to the cell membrane. The enzyme catalyses Fe(II)-heme o + 2 A + H2O = Fe(II)-heme a + 2 AH2. Its pathway is porphyrin-containing compound metabolism; heme A biosynthesis; heme A from heme O: step 1/1. Catalyzes the conversion of heme O to heme A by two successive hydroxylations of the methyl group at C8. The first hydroxylation forms heme I, the second hydroxylation results in an unstable dihydroxymethyl group, which spontaneously dehydrates, resulting in the formyl group of heme A. The chain is Heme A synthase from Caulobacter vibrioides (strain ATCC 19089 / CIP 103742 / CB 15) (Caulobacter crescentus).